The primary structure comprises 300 residues: 33 kDa chaperonin (300 aa).

Intrachain disulfides connect cysteine 235/cysteine 237 and cysteine 269/cysteine 272.

This sequence belongs to the HSP33 family. Under oxidizing conditions two disulfide bonds are formed involving the reactive cysteines. Under reducing conditions zinc is bound to the reactive cysteines and the protein is inactive.

The protein localises to the cytoplasm. Its function is as follows. Redox regulated molecular chaperone. Protects both thermally unfolding and oxidatively damaged proteins from irreversible aggregation. Plays an important role in the bacterial defense system toward oxidative stress. The sequence is that of 33 kDa chaperonin from Pseudomonas syringae pv. tomato (strain ATCC BAA-871 / DC3000).